Consider the following 211-residue polypeptide: LexA repressor (211 aa).

Positions 29 to 49 form a DNA-binding region, H-T-H motif; it reads VREICTAVGLRSTSTVHSHLN. Catalysis depends on for autocatalytic cleavage activity residues serine 131 and lysine 169.

It belongs to the peptidase S24 family. As to quaternary structure, homodimer.

It carries out the reaction Hydrolysis of Ala-|-Gly bond in repressor LexA.. Represses a number of genes involved in the response to DNA damage (SOS response), including recA and lexA. In the presence of single-stranded DNA, RecA interacts with LexA causing an autocatalytic cleavage which disrupts the DNA-binding part of LexA, leading to derepression of the SOS regulon and eventually DNA repair. This Clostridioides difficile (strain 630) (Peptoclostridium difficile) protein is LexA repressor.